Here is a 533-residue protein sequence, read N- to C-terminus: UDP-glucuronosyltransferase 1-2 (533 aa).

An N-terminal signal peptide occupies residues 1 to 27 (MDTGLCAPLRGLSGLLLLLCALPWAEG). 4 N-linked (GlcNAc...) asparagine glycosylation sites follow: asparagine 133, asparagine 141, asparagine 295, and asparagine 433. Residues 491-507 (VIGFLLAIVLTVVFIVY) form a helical membrane-spanning segment.

This sequence belongs to the UDP-glycosyltransferase family.

It localises to the microsome. The protein localises to the endoplasmic reticulum membrane. It catalyses the reaction glucuronate acceptor + UDP-alpha-D-glucuronate = acceptor beta-D-glucuronoside + UDP + H(+). Functionally, UDPGT is of major importance in the conjugation and subsequent elimination of potentially toxic xenobiotics and endogenous compounds. In Rattus norvegicus (Rat), this protein is UDP-glucuronosyltransferase 1-2 (Ugt1a2).